A 144-amino-acid chain; its full sequence is Cell division protein SepF (144 aa).

This sequence belongs to the SepF family. As to quaternary structure, homodimer. Interacts with FtsZ.

It is found in the cytoplasm. Cell division protein that is part of the divisome complex and is recruited early to the Z-ring. Probably stimulates Z-ring formation, perhaps through the cross-linking of FtsZ protofilaments. Its function overlaps with FtsA. This Geobacillus sp. (strain WCH70) protein is Cell division protein SepF.